A 1328-amino-acid chain; its full sequence is MKKIIKIRRFKFPFTKEKTINFASVRNKISYPDFLDIQIKSFTNFFCINYTYKNISNKGFYKVFIEYFPISDSKNKFIIDFISYKIYDPLYSIEECIKRGLTYNVYIRARFKIYRTRKRKITIENKRTKYFETIYQDVYFGTCPYMTPSGSFIFNGSERVIVSQLHRSPGVFFGQYDIPNLPKISYARIIPLKGSWIELSTDINNVMYIYLDIKKRLPITTLLRALGYTRDIDILNIFNLAEEVNINKVNYKKFLGRTLAARIFKTSYQKFEENDILLERNIKLKKYHIDIILYYKIKVISLYKKNEKNEKNLYYSIIHNTLKKDPTNSQKEANIYIYKELKDSFPKNDKKAKLFINKFFFDETHLGEVGRYKLNKTLKLDFPLKDQILNIEDIISIIENLIALCNNKKEVDDIDNLANRRVKTVGEQLYTQYTIGIARVSRIIKERINVKDNETLTPLELINSKTLTSVINSFFGTDELSQFMDQTNPLAEMTHKRRISSLGPGGLSRERAGFEIRDVNYSHYGRLCPIETPEGPNIGLISSLCVFAKINSMGFIETPYFKVKKGKVVINEAPIYISSDQEYGKLITQANAILNYKTGVLKNNIIVRVNADFPMVNYKKINYIDVSTNQIASISASLIPFLEHDDANRALMGSNMMRQSVPLLNPKAPIVGTGLEKHLAQYVNALIYAEGDGIVESVDANNIKVKYFNSEKEKLLSFEKRIKTYKLIKFRKTNQNTCLNIRPIVKKGMYVTKGQVLCEGFATQNGKLALGRNIKVAFMPFKGYNFEDAIVISEKVVREDWFTSIHIDEYSLEVRDTKLGMEEFTFDIPNFNEENKKKLDKYGIIKIGSEVKPGDVLIGRITPKKEGYPSSEENFLKAIFGKKVGTIKNTSLKADSSLFGVVIDTKIYSKFSSKEDEQKQFQIKKLNNKFMKNLKLLRKLLINKLILVLEGSVSEGILNSSYKEIIPKGKILNKLNLKKLLKNQEIIYQNWVNNKYKNNLVFKIIKFYYLKINELKIKLKRKKNRLLIGDEITSGIIKIAKVLIAKKRKLKVGDKMSGRHGNKGIVARIVKEEDMPYLEDGTSVDLVLNPLGVPSRMNLGQIYETILGWAGEKLGINFSTPIFDGASIEEISKYTDIANLPSFGNTYLFDGETGEKFDQPVTVGVIYMLKLNHMVDDKMHARSIGPYSLITQQPLGGKSKFGGQRLGEMEVWALEAFGAANILREILTVKSDDVKGRTKTYEAIVKRETIPNPGIPESFHVLLKELKGLGLSLKLEVIKKKEKKNQKIKVRIEIKEKDIIKYKKKVKEIKLKKLKELKEQLSKSNKKK.

This sequence belongs to the RNA polymerase beta chain family. The RNAP catalytic core consists of 2 alpha, 1 beta, 1 beta' and 1 omega subunit. When a sigma factor is associated with the core the holoenzyme is formed, which can initiate transcription.

It carries out the reaction RNA(n) + a ribonucleoside 5'-triphosphate = RNA(n+1) + diphosphate. In terms of biological role, DNA-dependent RNA polymerase catalyzes the transcription of DNA into RNA using the four ribonucleoside triphosphates as substrates. The polypeptide is DNA-directed RNA polymerase subunit beta (Karelsulcia muelleri (strain GWSS) (Sulcia muelleri)).